The following is a 375-amino-acid chain: Ketohexokinase (375 aa).

D319 provides a ligand contact to beta-D-fructose.

Belongs to the carbohydrate kinase PfkB family. As to quaternary structure, homodimer.

The catalysed reaction is beta-D-fructose + ATP = beta-D-fructose 1-phosphate + ADP + H(+). The protein operates within carbohydrate metabolism; fructose metabolism. Activated in the presence of 0.5 M KCl. 85% activity at 3.5 M KCl. 60% activity without KCl. Catalyzes the ATP-dependent phosphorylation of the ketose sugar fructose to fructose-1-phosphate. Does not produce fructose-6-phosphate. The sugars D-glucose, D-galactose, L-rhamnose, D-xylose, L-arabinose and D-ribose are not substrates of this enzyme. In Haloferax volcanii (strain ATCC 29605 / DSM 3757 / JCM 8879 / NBRC 14742 / NCIMB 2012 / VKM B-1768 / DS2) (Halobacterium volcanii), this protein is Ketohexokinase.